The chain runs to 996 residues: UPF0182 protein CE0802 (996 aa).

7 helical membrane passes run 19 to 39 (VTWIIGIIALLVLVTPLTVGF), 63 to 83 (IILFIVFALLAGFVTWLAGYF), 115 to 135 (ILIIVPIFVGLLGGLVGQRSW), 176 to 196 (STLLVVAFIIALVGHYLLGGI), 212 to 234 (GARAQLAVTAGLWMLVRVATYWL), 262 to 282 (KIILMVISIIVAVAFFSAIFL), and 290 to 310 (LAVVLLVLSSVVVGAVWPLML). The interval 920–950 (VPDVNATEDADATTDGEDETPAAPAAPAGSE) is disordered. A compositionally biased stretch (acidic residues) spans 925-939 (ATEDADATTDGEDET). The segment covering 940 to 950 (PAAPAAPAGSE) has biased composition (low complexity).

Belongs to the UPF0182 family.

The protein resides in the cell membrane. This chain is UPF0182 protein CE0802, found in Corynebacterium efficiens (strain DSM 44549 / YS-314 / AJ 12310 / JCM 11189 / NBRC 100395).